The chain runs to 379 residues: Cytochrome b (379 aa).

Transmembrane regions (helical) follow at residues 33–53, 77–98, 113–133, and 178–198; these read FGSLLGMCLVLQIFTGLFLAM, WLIRYMHANGASLFFICLYIHI, WNIGILLLFLTMATAFVGYVL, and FFAFHFILPFIIAALATVHLL. Heme b contacts are provided by His83 and His97. Heme b contacts are provided by His182 and His196. His201 serves as a coordination point for a ubiquinone. The next 4 membrane-spanning stretches (helical) occupy residues 226–246, 288–308, 320–340, and 347–367; these read TKDFLGALIXIMFFMTLVLYF, LGGVVALILSILVLALLPYIH, ISQFLFWTLVSDLLLLTWIGG, and FIIIGQTASXMYFTIILIXMX.

This sequence belongs to the cytochrome b family. The cytochrome bc1 complex contains 11 subunits: 3 respiratory subunits (MT-CYB, CYC1 and UQCRFS1), 2 core proteins (UQCRC1 and UQCRC2) and 6 low-molecular weight proteins (UQCRH/QCR6, UQCRB/QCR7, UQCRQ/QCR8, UQCR10/QCR9, UQCR11/QCR10 and a cleavage product of UQCRFS1). This cytochrome bc1 complex then forms a dimer. Requires heme b as cofactor.

It is found in the mitochondrion inner membrane. Functionally, component of the ubiquinol-cytochrome c reductase complex (complex III or cytochrome b-c1 complex) that is part of the mitochondrial respiratory chain. The b-c1 complex mediates electron transfer from ubiquinol to cytochrome c. Contributes to the generation of a proton gradient across the mitochondrial membrane that is then used for ATP synthesis. The polypeptide is Cytochrome b (MT-CYB) (Thomomys umbrinus (Southern pocket gopher)).